Reading from the N-terminus, the 90-residue chain is Non-structural protein NS-S (90 aa).

Positions 4–29 (KLSLPGKNLKMQKRRWKPTRMMLTRA) are nucleolar signal.

The protein belongs to the hantavirus NS-S protein family. As to quaternary structure, interacts with host MAVS; this interaction may reduce MAVS ubiquitination.

It localises to the host cytoplasm. The protein resides in the host perinuclear region. It is found in the host nucleus. Functionally, antagonizes host type-I IFN signaling pathway. This chain is Non-structural protein NS-S (N), found in Homo sapiens (Human).